We begin with the raw amino-acid sequence, 241 residues long: Spheroidene monooxygenase (241 aa).

The protein belongs to the CrtA family. Requires heme as cofactor.

The enzyme catalyses spheroidene + 4 reduced [2Fe-2S]-[ferredoxin] + 2 O2 + 4 H(+) = spheroiden-2-one + 4 oxidized [2Fe-2S]-[ferredoxin] + 3 H2O. The catalysed reaction is spirilloxanthin + 4 reduced [2Fe-2S]-[ferredoxin] + 2 O2 + 4 H(+) = 2-oxospirilloxanthin + 4 oxidized [2Fe-2S]-[ferredoxin] + 3 H2O. It catalyses the reaction 2-oxospirilloxanthin + 4 reduced [2Fe-2S]-[ferredoxin] + 2 O2 + 4 H(+) = 2,2'-dioxospirilloxanthin + 4 oxidized [2Fe-2S]-[ferredoxin] + 3 H2O. It carries out the reaction spheroidene + 2 reduced [2Fe-2S]-[ferredoxin] + O2 + 2 H(+) = 2-hydroxyspheroidene + 2 oxidized [2Fe-2S]-[ferredoxin] + H2O. The enzyme catalyses 2-hydroxyspheroidene + 2 reduced [2Fe-2S]-[ferredoxin] + O2 + 2 H(+) = 2,2-dihydroxyspheroidene + 2 oxidized [2Fe-2S]-[ferredoxin] + H2O. The catalysed reaction is 2,2-dihydroxyspheroidene = spheroiden-2-one + H2O. It catalyses the reaction spirilloxanthin + 2 reduced [2Fe-2S]-[ferredoxin] + O2 + 2 H(+) = 2-hydroxyspirilloxanthin + 2 oxidized [2Fe-2S]-[ferredoxin] + H2O. It carries out the reaction 2-hydroxyspirilloxanthin + 2 reduced [2Fe-2S]-[ferredoxin] + O2 + 2 H(+) = 2,2-dihydroxyspirilloxanthin + 2 oxidized [2Fe-2S]-[ferredoxin] + H2O. The enzyme catalyses 2,2-dihydroxyspirilloxanthin = 2-oxospirilloxanthin + H2O. The catalysed reaction is 2-oxospirilloxanthin + 2 reduced [2Fe-2S]-[ferredoxin] + O2 + 2 H(+) = 2'-hydroxy-2-oxospirilloxanthin + 2 oxidized [2Fe-2S]-[ferredoxin] + H2O. It catalyses the reaction 2'-hydroxy-2-oxospirilloxanthin + 2 reduced [2Fe-2S]-[ferredoxin] + O2 + 2 H(+) = 2',2'-dihydroxy-2-oxospirilloxanthin + 2 oxidized [2Fe-2S]-[ferredoxin] + H2O. It carries out the reaction 2',2'-dihydroxy-2-oxospirilloxanthin = 2,2'-dioxospirilloxanthin + H2O. It participates in carotenoid biosynthesis; spheroidene biosynthesis. Its function is as follows. Involved in the biosynthesis of the carotenoid spheroidene. Catalyzes the introduction of one keto group at the C-2 position of spheroidene. In vitro, can also catalyze the introduction of two keto groups at the C-2 and C-2' positions of spirilloxanthin, but spirilloxanthin biosynthesis pathway is not present in R.capsulatus. This Rhodobacter capsulatus (strain ATCC BAA-309 / NBRC 16581 / SB1003) protein is Spheroidene monooxygenase.